The primary structure comprises 461 residues: Cyclin-A2-4 (461 aa).

It belongs to the cyclin family. Cyclin AB subfamily.

The chain is Cyclin-A2-4 (CYCA2-4) from Arabidopsis thaliana (Mouse-ear cress).